A 467-amino-acid chain; its full sequence is Dynactin subunit 4 (467 aa).

Position 2 is an N-acetylalanine (alanine 2). Residues 152 to 172 (QQLAQKEKVERDRKKLARRRN) are a coiled coil. A Phosphoserine modification is found at serine 203. Lysine 222 is covalently cross-linked (Glycyl lysine isopeptide (Lys-Gly) (interchain with G-Cter in SUMO2)). Residue threonine 414 is modified to Phosphothreonine.

The protein belongs to the dynactin subunit 4 family. In terms of assembly, subunit of dynactin, a multiprotein complex part of a tripartite complex with dynein and a adapter, such as BICDL1, BICD2 or HOOK3. The dynactin complex is built around ACTR1A/ACTB filament and consists of an actin-related filament composed of a shoulder domain, a pointed end and a barbed end. Its length is defined by its flexible shoulder domain. The soulder is composed of 2 DCTN1 subunits, 4 DCTN2 and 2 DCTN3. The 4 DCNT2 (via N-terminus) bind the ACTR1A filament and act as molecular rulers to determine the length. The pointed end is important for binding dynein-dynactin cargo adapters. Consists of 4 subunits: ACTR10, DCNT4, DCTN5 and DCTN6. The barbed end is composed of a CAPZA1:CAPZB heterodimers, which binds ACTR1A/ACTB filament and dynactin and stabilizes dynactin. Interacts with ATP7B, but not ATP7A, in a copper-dependent manner. Interacts with ANK2; this interaction is required for localization at costameres. Interacts with N4BP2L1.

The protein resides in the cytoplasm. It localises to the cytoskeleton. Its subcellular location is the microtubule organizing center. The protein localises to the centrosome. It is found in the stress fiber. The protein resides in the cell cortex. It localises to the myofibril. Its subcellular location is the sarcomere. Part of the dynactin complex that activates the molecular motor dynein for ultra-processive transport along microtubules. This chain is Dynactin subunit 4 (Dctn4), found in Mus musculus (Mouse).